The primary structure comprises 363 residues: Probable tRNA pseudouridine synthase D (363 aa).

Aspartate 82 serves as the catalytic Nucleophile. One can recognise a TRUD domain in the interval 151 to 363 (YLPAYIGYQR…IARTDPRLFT (213 aa)).

It belongs to the pseudouridine synthase TruD family.

The enzyme catalyses uridine(13) in tRNA = pseudouridine(13) in tRNA. Functionally, could be responsible for synthesis of pseudouridine from uracil-13 in transfer RNAs. In Sulfurisphaera tokodaii (strain DSM 16993 / JCM 10545 / NBRC 100140 / 7) (Sulfolobus tokodaii), this protein is Probable tRNA pseudouridine synthase D.